A 391-amino-acid polypeptide reads, in one-letter code: 3-ketoacyl-CoA thiolase (391 aa).

The Acyl-thioester intermediate role is filled by C95. Residues H347 and C377 each act as proton acceptor in the active site.

This sequence belongs to the thiolase-like superfamily. Thiolase family. As to quaternary structure, heterotetramer of two alpha chains (FadB) and two beta chains (FadA).

The protein localises to the cytoplasm. It carries out the reaction an acyl-CoA + acetyl-CoA = a 3-oxoacyl-CoA + CoA. It functions in the pathway lipid metabolism; fatty acid beta-oxidation. Its function is as follows. Catalyzes the final step of fatty acid oxidation in which acetyl-CoA is released and the CoA ester of a fatty acid two carbons shorter is formed. This Marinobacter nauticus (strain ATCC 700491 / DSM 11845 / VT8) (Marinobacter aquaeolei) protein is 3-ketoacyl-CoA thiolase.